The chain runs to 264 residues: Rhamnosyltransferase WbbL (264 aa).

The protein belongs to the glycosyltransferase 2 family.

The protein operates within bacterial outer membrane biogenesis; lipopolysaccharide biosynthesis. Its function is as follows. Rhamnosyltransferase involved in lipopolysaccharide biosynthesis. The sequence is that of Rhamnosyltransferase WbbL (wbbL) from Escherichia coli (strain K12).